We begin with the raw amino-acid sequence, 367 residues long: Membrane-bound lytic murein transglycosylase C (367 aa).

An N-terminal signal peptide occupies residues 1-19; it reads MRKYAKYLPFCLVVPFLAA. Residue Cys-20 is the site of N-palmitoyl cysteine attachment. A lipid anchor (S-diacylglycerol cysteine) is attached at Cys-20.

Belongs to the transglycosylase Slt family.

The protein resides in the cell outer membrane. The enzyme catalyses Exolytic cleavage of the (1-&gt;4)-beta-glycosidic linkage between N-acetylmuramic acid (MurNAc) and N-acetylglucosamine (GlcNAc) residues in peptidoglycan, from either the reducing or the non-reducing ends of the peptidoglycan chains, with concomitant formation of a 1,6-anhydrobond in the MurNAc residue.. Functionally, murein-degrading enzyme. May play a role in recycling of muropeptides during cell elongation and/or cell division. This is Membrane-bound lytic murein transglycosylase C from Haemophilus ducreyi (strain 35000HP / ATCC 700724).